The sequence spans 86 residues: Serine protease inhibitor Kazal-type 4 (86 aa).

An N-terminal signal peptide occupies residues 1–26 (MAMHLWLVTLTLVPLLGMDRELMVSA). The region spanning 31–86 (FPRMPFCEHMAELPNCPQTPNLICGTDGLTYENECHLCLTRMKTMKDIQIMKDGQC) is the Kazal-like domain. Intrachain disulfides connect Cys-37-Cys-68, Cys-46-Cys-65, and Cys-54-Cys-86.

Expressed in the intestinal tract.

The protein resides in the secreted. The sequence is that of Serine protease inhibitor Kazal-type 4 (Spink4) from Mus musculus (Mouse).